Consider the following 179-residue polypeptide: Large ribosomal subunit protein uL5 (179 aa).

The protein belongs to the universal ribosomal protein uL5 family. Part of the 50S ribosomal subunit; part of the 5S rRNA/L5/L18/L25 subcomplex. Contacts the 5S rRNA and the P site tRNA. Forms a bridge to the 30S subunit in the 70S ribosome.

In terms of biological role, this is one of the proteins that bind and probably mediate the attachment of the 5S RNA into the large ribosomal subunit, where it forms part of the central protuberance. In the 70S ribosome it contacts protein S13 of the 30S subunit (bridge B1b), connecting the 2 subunits; this bridge is implicated in subunit movement. Contacts the P site tRNA; the 5S rRNA and some of its associated proteins might help stabilize positioning of ribosome-bound tRNAs. This Neisseria meningitidis serogroup C (strain 053442) protein is Large ribosomal subunit protein uL5.